A 156-amino-acid polypeptide reads, in one-letter code: Transcription factor MafF (156 aa).

Positions 51–76 (RLKQRRRTLKNRGYAASCRVKRVCQK) are basic motif. Positions 51–114 (RLKQRRRTLK…DALRGKCEAL (64 aa)) constitute a bZIP domain. The interval 79–93 (LQKQKSELEREVDKL) is leucine-zipper.

Belongs to the bZIP family. Maf subfamily. As to quaternary structure, monomer and homo- or heterodimer. Interacts with MIP. Forms high affinity heterodimers with members of the CNC-bZIP family such as NFE2L1/NRF1. Highly expressed in the lung, lower expression in the brain, thymus, liver, spleen, intestine, kidney, heart, muscle, and ovary. Not significantly expressed in hematopoietic cells.

The protein resides in the nucleus. Functionally, since they lack a putative transactivation domain, the small Mafs behave as transcriptional repressors when they dimerize among themselves. However, they seem to serve as transcriptional activators by dimerizing with other (usually larger) basic-zipper proteins, such as NFE2L1/NRF1, and recruiting them to specific DNA-binding sites. Interacts with the upstream promoter region of the oxytocin receptor gene. May be a transcriptional enhancer in the up-regulation of the oxytocin receptor gene at parturition. The chain is Transcription factor MafF (Maff) from Mus musculus (Mouse).